Reading from the N-terminus, the 365-residue chain is tRNA(Met) cytidine acetate ligase (365 aa).

Residues 7 to 20 (IAEFNPFHNGHKYL), G96, N152, and R175 each bind ATP.

Belongs to the TmcAL family.

The protein localises to the cytoplasm. It carries out the reaction cytidine(34) in elongator tRNA(Met) + acetate + ATP = N(4)-acetylcytidine(34) in elongator tRNA(Met) + AMP + diphosphate. In terms of biological role, catalyzes the formation of N(4)-acetylcytidine (ac(4)C) at the wobble position of elongator tRNA(Met), using acetate and ATP as substrates. First activates an acetate ion to form acetyladenylate (Ac-AMP) and then transfers the acetyl group to tRNA to form ac(4)C34. This is tRNA(Met) cytidine acetate ligase from Streptococcus pneumoniae (strain ATCC 700669 / Spain 23F-1).